The chain runs to 529 residues: Bifunctional purine biosynthesis protein PurH (529 aa).

The region spanning 1-148 (MNNARPIRRA…KNHKDTTIIV (148 aa)) is the MGS-like domain.

The protein belongs to the PurH family.

The catalysed reaction is (6R)-10-formyltetrahydrofolate + 5-amino-1-(5-phospho-beta-D-ribosyl)imidazole-4-carboxamide = 5-formamido-1-(5-phospho-D-ribosyl)imidazole-4-carboxamide + (6S)-5,6,7,8-tetrahydrofolate. The enzyme catalyses IMP + H2O = 5-formamido-1-(5-phospho-D-ribosyl)imidazole-4-carboxamide. It participates in purine metabolism; IMP biosynthesis via de novo pathway; 5-formamido-1-(5-phospho-D-ribosyl)imidazole-4-carboxamide from 5-amino-1-(5-phospho-D-ribosyl)imidazole-4-carboxamide (10-formyl THF route): step 1/1. It functions in the pathway purine metabolism; IMP biosynthesis via de novo pathway; IMP from 5-formamido-1-(5-phospho-D-ribosyl)imidazole-4-carboxamide: step 1/1. The chain is Bifunctional purine biosynthesis protein PurH from Shewanella halifaxensis (strain HAW-EB4).